We begin with the raw amino-acid sequence, 74 residues long: Putative membrane protein insertion efficiency factor (74 aa).

It belongs to the UPF0161 family.

The protein resides in the cell membrane. Its function is as follows. Could be involved in insertion of integral membrane proteins into the membrane. The protein is Putative membrane protein insertion efficiency factor of Anoxybacillus flavithermus (strain DSM 21510 / WK1).